We begin with the raw amino-acid sequence, 1322 residues long: Myosin-1 (1322 aa).

A Myosin motor domain is found at 42-728 (AGVSDMTLLT…TLFALETMRD (687 aa)). 135 to 142 (GESGAGKT) is an ATP binding site. Phosphoserine is present on Ser-369. The interval 417–499 (VIGVLDIYGF…PGIFSALNDA (83 aa)) is actin-binding. IQ domains lie at 732–752 (HNMA…REES) and 753–778 (ARRI…YGHQ). Residues 786-980 (RRRFSLISMR…SGEPPTSVSR (195 aa)) form the TH1 domain. 2 disordered regions span residues 966 to 1090 (IVSV…MPSY) and 1137 to 1162 (VQQL…ATPA). Low complexity-rich tracts occupy residues 1000–1017 (SRPV…PTTT) and 1027–1056 (GGTA…ASGA). Composition is skewed to polar residues over residues 1078–1087 (PATSAPSSGM) and 1137–1148 (VQQLGSSSTAQT). The 60-residue stretch at 1184–1243 (RRLPRYRALYDFETQEAGELPLRTGDIVELEEKEENGWWLVKKGSTEGWSPADYLELIAE) folds into the SH3 domain. The tract at residues 1246–1300 (AAKPRPPPPAKPASAKPAAAPARVSQSSVTSSWTPPDSHAAPVAVMPGMGDPGGF) is disordered. Residues 1257–1267 (PASAKPAAAPA) show a composition bias toward low complexity. Polar residues predominate over residues 1269–1280 (VSQSSVTSSWTP).

It belongs to the TRAFAC class myosin-kinesin ATPase superfamily. Myosin family. In terms of processing, phosphorylation of the TEDS site (Ser-369) is required for the polarization of the actin cytoskeleton. Phosphorylation probably activates the myosin-I ATPase activity.

Its subcellular location is the cytoplasm. The protein resides in the cytoskeleton. It localises to the actin patch. Type-I myosin implicated in the organization of the actin cytoskeleton. Required for proper actin cytoskeleton polarization. At the cell cortex, assembles in patch-like structures together with proteins from the actin-polymerizing machinery and promotes actin assembly. Functions as actin nucleation-promoting factor (NPF) for the Arp2/3 complex. The polypeptide is Myosin-1 (MYO1) (Malassezia globosa (strain ATCC MYA-4612 / CBS 7966) (Dandruff-associated fungus)).